We begin with the raw amino-acid sequence, 507 residues long: 3-oxosteroid 1-dehydrogenase (507 aa).

9–38 (DLLVVGSGGGALTGAYTAAAQGLTTIVLEK) contributes to the FAD binding site. The interval 299–385 (GLVVDSPGSV…LPRPDYRPER (87 aa)) is disordered.

The protein belongs to the FAD-dependent oxidoreductase 2 family. 3-oxosteroid dehydrogenase subfamily. The cofactor is FAD.

It is found in the cell membrane. The enzyme catalyses a 3-oxosteroid + A = a 3-oxo-Delta(1)-steroid + AH2. It participates in lipid metabolism; steroid degradation. Catalyzes the elimination of the C-1 and C-2 hydrogen atoms of the A-ring from the polycyclic ring structure of 3-ketosteroids. The sequence is that of 3-oxosteroid 1-dehydrogenase from Rhodococcus opacus (Nocardia opaca).